The primary structure comprises 1946 residues: Integrin beta-like protein E (1946 aa).

The signal sequence occupies residues 1-22; that stretch reads MNNLFKFLFVLLAIFCPPISDL. Residues 23–1875 are Extracellular-facing; that stretch reads VVSHGVPQQH…ATTQTTNNKT (1853 aa). Residues N107, N134, and N203 are each glycosylated (N-linked (GlcNAc...) asparagine). One can recognise an EGF-like domain in the interval 423–460; that stretch reads YGQNCDPTPPCDKGIPNEGILGDGKCMCINGYSGDKCD. Intrachain disulfides connect C433–C448 and C450–C459. The VWFA domain occupies 514 to 699; it reads DVFVLVDVNV…AGLKSVLSNV (186 aa). 18 N-linked (GlcNAc...) asparagine glycosylation sites follow: N705, N860, N1043, N1113, N1177, N1374, N1401, N1513, N1611, N1620, N1662, N1671, N1737, N1743, N1762, N1812, N1852, and N1873. The helical transmembrane segment at 1876–1896 threads the bilayer; that stretch reads VLTGAIAGAAAGTALIAAAAW. Topologically, residues 1897–1946 are cytoplasmic; sequence KLLRKAAPPTDTFFSEAAFLGDGVNANPLYEQSASAAENPLYQSASDNTD.

This sequence belongs to the SIB family. In terms of assembly, interacts with talA/talin.

The protein resides in the membrane. In terms of biological role, implicated in cellular adhesion. The sequence is that of Integrin beta-like protein E (sibE) from Dictyostelium discoideum (Social amoeba).